The primary structure comprises 397 residues: Subtilisin-like serine protease Pen ch 13.0101 (397 aa).

Residues 1 to 19 (MGFLKVLATSLATLAVVDA) form the signal peptide. Residues 20–115 (GTLLTASNTD…IEPDMIVNAT (96 aa)) constitute a propeptide, removed in mature form. The Inhibitor I9 domain maps to 35–113 (SYIVVMNDDV…KYIEPDMIVN (79 aa)). N113 is a glycosylation site (N-linked (GlcNAc...) asparagine). A Peptidase S8 domain is found at 125 to 397 (SWGLARISSK…SKLLYNGINV (273 aa)). Residues D157 and H188 each act as charge relay system in the active site. 2 N-linked (GlcNAc...) asparagine glycosylation sites follow: N249 and N284. The active-site Charge relay system is the S343.

It belongs to the peptidase S8 family.

Its subcellular location is the secreted. Functionally, serine protease. The chain is Subtilisin-like serine protease Pen ch 13.0101 from Penicillium rubens.